The following is a 617-amino-acid chain: Dihydroxy-acid dehydratase (617 aa).

Aspartate 81 lines the Mg(2+) pocket. Cysteine 122 serves as a coordination point for [2Fe-2S] cluster. Mg(2+)-binding residues include aspartate 123 and lysine 124. At lysine 124 the chain carries N6-carboxylysine. Residue cysteine 197 participates in [2Fe-2S] cluster binding. Mg(2+) is bound at residue glutamate 493. Catalysis depends on serine 519, which acts as the Proton acceptor.

This sequence belongs to the IlvD/Edd family. Homodimer. The cofactor is [2Fe-2S] cluster. It depends on Mg(2+) as a cofactor.

The catalysed reaction is (2R)-2,3-dihydroxy-3-methylbutanoate = 3-methyl-2-oxobutanoate + H2O. The enzyme catalyses (2R,3R)-2,3-dihydroxy-3-methylpentanoate = (S)-3-methyl-2-oxopentanoate + H2O. It functions in the pathway amino-acid biosynthesis; L-isoleucine biosynthesis; L-isoleucine from 2-oxobutanoate: step 3/4. Its pathway is amino-acid biosynthesis; L-valine biosynthesis; L-valine from pyruvate: step 3/4. Its function is as follows. Functions in the biosynthesis of branched-chain amino acids. Catalyzes the dehydration of (2R,3R)-2,3-dihydroxy-3-methylpentanoate (2,3-dihydroxy-3-methylvalerate) into 2-oxo-3-methylpentanoate (2-oxo-3-methylvalerate) and of (2R)-2,3-dihydroxy-3-methylbutanoate (2,3-dihydroxyisovalerate) into 2-oxo-3-methylbutanoate (2-oxoisovalerate), the penultimate precursor to L-isoleucine and L-valine, respectively. This is Dihydroxy-acid dehydratase from Corynebacterium aurimucosum (strain ATCC 700975 / DSM 44827 / CIP 107346 / CN-1) (Corynebacterium nigricans).